A 314-amino-acid polypeptide reads, in one-letter code: D-alanine--D-alanine ligase (314 aa).

The region spanning 112-307 (KQVWQSLGLP…FQQLVLSILD (196 aa)) is the ATP-grasp domain. Residue 138–193 (AQMLGFPLIVKPAHEGSSIGMAKVGDVAELIAAWRAASAYDAQVLVEQWIQGPEFT) participates in ATP binding. Positions 261, 274, and 276 each coordinate Mg(2+).

Belongs to the D-alanine--D-alanine ligase family. It depends on Mg(2+) as a cofactor. Mn(2+) serves as cofactor.

The protein resides in the cytoplasm. The catalysed reaction is 2 D-alanine + ATP = D-alanyl-D-alanine + ADP + phosphate + H(+). Its pathway is cell wall biogenesis; peptidoglycan biosynthesis. Functionally, cell wall formation. The polypeptide is D-alanine--D-alanine ligase (Stutzerimonas stutzeri (strain A1501) (Pseudomonas stutzeri)).